Here is a 396-residue protein sequence, read N- to C-terminus: Tryptophan synthase beta chain (396 aa).

Position 88 is an N6-(pyridoxal phosphate)lysine (lysine 88).

It belongs to the TrpB family. Tetramer of two alpha and two beta chains. It depends on pyridoxal 5'-phosphate as a cofactor.

The enzyme catalyses (1S,2R)-1-C-(indol-3-yl)glycerol 3-phosphate + L-serine = D-glyceraldehyde 3-phosphate + L-tryptophan + H2O. It participates in amino-acid biosynthesis; L-tryptophan biosynthesis; L-tryptophan from chorismate: step 5/5. Its function is as follows. The beta subunit is responsible for the synthesis of L-tryptophan from indole and L-serine. This is Tryptophan synthase beta chain from Shewanella putrefaciens (strain CN-32 / ATCC BAA-453).